The following is a 501-amino-acid chain: MAAPEPAPRRAREREREREDESEDESDILEESPCGRWQKRREQVNQGNMPGLQSTFLAMDTEEGVEVVWNELHFGDRKAFAAHEEKIQTVFEQLVLVDHPNIVKLHKYWLDTSEACARVIFITEYVSSGSLKQFLKKTKKNHKAMNARAWKRWCTQILSALSFLHACSPPIIHGNLTSDTIFIQHNGLIKIGSVWHRIFSNALPDDLRSPIRAEREELRNLHFFPPEYGEVADGTAVDIFSFGMCALEMAVLEIQTNGDTRVTEEAIARARHSLSDPNMREFILCCLARDPARRPSAHSLLFHRVLFEVHSLKLLAAHCFIQHQYLMPENVVEEKTKAMDLHAVLAELPRPRRPPLQWRYSEVSFMELDKFLEDVRNGIYPLMNFAATRPLGLPRVLAPPPEEVQKAKTPTPEPFDSETRKVIQMQCNLERSEDKARWHLTLLLVLEDRLHRQLTYDLLPTDSAQDLASELVHYGFLHEDDRMKLAAFLESTFLKYRGTQA.

The disordered stretch occupies residues 1 to 33; sequence MAAPEPAPRRAREREREREDESEDESDILEESP. Positions 7-19 are enriched in basic and acidic residues; the sequence is APRRARERERERE. Acidic residues predominate over residues 20–30; sequence DESEDESDILE. The Protein kinase domain maps to 38 to 306; it reads QKRREQVNQG…AHSLLFHRVL (269 aa). Phosphothreonine is present on residues T409 and T411.

It belongs to the protein kinase superfamily. Ser/Thr protein kinase family.

The protein resides in the cytoplasm. In terms of biological role, may regulate apoptosis of neural progenitor cells during their differentiation. This Homo sapiens (Human) protein is Nuclear receptor-binding protein 2.